Here is a 362-residue protein sequence, read N- to C-terminus: Probable S-adenosylmethionine-dependent methyltransferase At5g37970 (362 aa).

Residues Tyr19, Cys66, Asn71, Asp107, Ser136, and Phe137 each contribute to the S-adenosyl-L-homocysteine site. Mg(2+)-binding residues include Asn175, Glu261, and Phe263.

Belongs to the methyltransferase superfamily. Type-7 methyltransferase family. As to quaternary structure, homodimer. Requires Mg(2+) as cofactor.

This Arabidopsis thaliana (Mouse-ear cress) protein is Probable S-adenosylmethionine-dependent methyltransferase At5g37970.